The primary structure comprises 253 residues: Phosphoadenosine 5'-phosphosulfate reductase (253 aa).

The active-site Nucleophile; cysteine thiosulfonate intermediate is C239.

Belongs to the PAPS reductase family. CysH subfamily.

It is found in the cytoplasm. It carries out the reaction [thioredoxin]-disulfide + sulfite + adenosine 3',5'-bisphosphate + 2 H(+) = [thioredoxin]-dithiol + 3'-phosphoadenylyl sulfate. The protein operates within sulfur metabolism; hydrogen sulfide biosynthesis; sulfite from sulfate: step 3/3. Functionally, catalyzes the formation of sulfite from phosphoadenosine 5'-phosphosulfate (PAPS) using thioredoxin as an electron donor. The sequence is that of Phosphoadenosine 5'-phosphosulfate reductase from Photobacterium profundum (strain SS9).